Here is a 239-residue protein sequence, read N- to C-terminus: UPF0126 membrane protein VC_2382 (239 aa).

6 helical membrane-spanning segments follow: residues 38–58, 62–82, 86–106, 122–142, 153–173, and 185–205; these read LLYL…VLLA, KMDP…GGTI, ALGA…VIMI, AWWI…GIGV, LIAI…RDVL, and VYAT…AMGY.

Belongs to the UPF0126 family.

The protein localises to the cell membrane. The chain is UPF0126 membrane protein VC_2382 from Vibrio cholerae serotype O1 (strain ATCC 39315 / El Tor Inaba N16961).